A 466-amino-acid chain; its full sequence is 3-isopropylmalate dehydratase large subunit (466 aa).

Residues cysteine 347, cysteine 407, and cysteine 410 each coordinate [4Fe-4S] cluster.

This sequence belongs to the aconitase/IPM isomerase family. LeuC type 1 subfamily. Heterodimer of LeuC and LeuD. The cofactor is [4Fe-4S] cluster.

It catalyses the reaction (2R,3S)-3-isopropylmalate = (2S)-2-isopropylmalate. It functions in the pathway amino-acid biosynthesis; L-leucine biosynthesis; L-leucine from 3-methyl-2-oxobutanoate: step 2/4. Functionally, catalyzes the isomerization between 2-isopropylmalate and 3-isopropylmalate, via the formation of 2-isopropylmaleate. This Pseudoalteromonas translucida (strain TAC 125) protein is 3-isopropylmalate dehydratase large subunit.